The chain runs to 66 residues: Beta-defensin 107A (66 aa).

The first 22 residues, 1 to 22, serve as a signal peptide directing secretion; it reads MKIFFFIFAALILLAQIFQART. Intrachain disulfides connect Cys-37/Cys-51 and Cys-41/Cys-60.

This sequence belongs to the beta-defensin family.

The protein resides in the secreted. Functionally, has antibacterial activity. The chain is Beta-defensin 107A (DEFB107A) from Macaca fascicularis (Crab-eating macaque).